A 496-amino-acid polypeptide reads, in one-letter code: Probable CtpA-like serine protease (496 aa).

Positions 1–16 (MDDKQHTSSSDDERAE) are enriched in basic and acidic residues. Residues 1–27 (MDDKQHTSSSDDERAEIATSNQDQETN) form a disordered region. A compositionally biased stretch (polar residues) spans 18–27 (ATSNQDQETN). The helical transmembrane segment at 39 to 59 (FISILIGTILITAVITVVAYI) threads the bilayer. The region spanning 124-206 (TKSFNEGVSG…TEVTLTVQRG (83 aa)) is the PDZ domain. Residues Ser-329, Asp-340, and Lys-354 each act as charge relay system in the active site.

It belongs to the peptidase S41A family.

Its subcellular location is the cell membrane. The chain is Probable CtpA-like serine protease from Staphylococcus aureus (strain MSSA476).